Here is a 144-residue protein sequence, read N- to C-terminus: uncharacterized protein (144 aa).

N-linked (GlcNAc...) asparagine glycans are attached at residues Asn-14 and Asn-15. Residues 90 to 110 (FSWFIFGLFIACLLLCITLVL) form a helical membrane-spanning segment. The segment at 120–144 (NKATEVVPSSNIDDEEKQLSLSDMI) is disordered.

It is found in the membrane. This is an uncharacterized protein from Saccharomyces cerevisiae (strain ATCC 204508 / S288c) (Baker's yeast).